A 131-amino-acid polypeptide reads, in one-letter code: MVILYTTASCASCRKAKAWLEEHQIDYIEKNIVSNSMTVDELKSILRLTEEGATEIISTRSKTFQDLNINIDELSLNEFYTLIIEHPLMLRRPIMLDEKRLQIGFNEEEIRKFLPRSVRTFLNIELQKLAN.

Residues Cys-10 and Cys-13 are joined by a disulfide bond.

It belongs to the ArsC family. Spx subfamily. Interacts with the C-terminal domain of the alpha subunit of the RNAP.

It is found in the cytoplasm. Its function is as follows. Global transcriptional regulator that plays a key role in stress response and exerts either positive or negative regulation of genes. Acts by interacting with the C-terminal domain of the alpha subunit of the RNA polymerase (RNAP). This interaction can enhance binding of RNAP to the promoter region of target genes and stimulate their transcription, or block interaction of RNAP with activator. The polypeptide is Global transcriptional regulator Spx 2 (Bacillus cereus (strain ATCC 14579 / DSM 31 / CCUG 7414 / JCM 2152 / NBRC 15305 / NCIMB 9373 / NCTC 2599 / NRRL B-3711)).